We begin with the raw amino-acid sequence, 613 residues long: DNA mismatch repair protein MutL (613 aa).

Residues 364–393 (EPAVARQPEAPRYSSGASAPRPTGANYPHA) form a disordered region.

The protein belongs to the DNA mismatch repair MutL/HexB family.

This protein is involved in the repair of mismatches in DNA. It is required for dam-dependent methyl-directed DNA mismatch repair. May act as a 'molecular matchmaker', a protein that promotes the formation of a stable complex between two or more DNA-binding proteins in an ATP-dependent manner without itself being part of a final effector complex. This Enterobacter sp. (strain 638) protein is DNA mismatch repair protein MutL.